The following is a 341-amino-acid chain: Glucokinase (341 aa).

18–23 is an ATP binding site; it reads GDIGGT.

This sequence belongs to the bacterial glucokinase family.

Its subcellular location is the cytoplasm. The catalysed reaction is D-glucose + ATP = D-glucose 6-phosphate + ADP + H(+). This chain is Glucokinase, found in Rhizobium etli (strain CIAT 652).